Reading from the N-terminus, the 67-residue chain is Large ribosomal subunit protein uL29 (67 aa).

It belongs to the universal ribosomal protein uL29 family.

This chain is Large ribosomal subunit protein uL29, found in Methanosarcina mazei (strain ATCC BAA-159 / DSM 3647 / Goe1 / Go1 / JCM 11833 / OCM 88) (Methanosarcina frisia).